Consider the following 101-residue polypeptide: RNA-binding protein Hfq (101 aa).

Residues 9-68 (DPFLNALRRERVPVSIYLVNGIKLQGQVESFDQFVILLKNTVSQMVYKHAISTVVPSRPV) enclose the Sm domain. Residues 63 to 101 (VPSRPVSHHSNNPSGSTNNYHGSNPSAPQQPQQDSDDAE) form a disordered region. A compositionally biased stretch (polar residues) spans 70–86 (HHSNNPSGSTNNYHGSN).

Belongs to the Hfq family. Homohexamer.

In terms of biological role, RNA chaperone that binds small regulatory RNA (sRNAs) and mRNAs to facilitate mRNA translational regulation in response to envelope stress, environmental stress and changes in metabolite concentrations. Also binds with high specificity to tRNAs. Positively regulates the expression of the yst gene for heat-stable enterotoxin (Y-ST). The polypeptide is RNA-binding protein Hfq (Yersinia enterocolitica).